Reading from the N-terminus, the 94-residue chain is Small ribosomal subunit protein uS17 (94 aa).

Belongs to the universal ribosomal protein uS17 family. As to quaternary structure, part of the 30S ribosomal subunit.

Functionally, one of the primary rRNA binding proteins, it binds specifically to the 5'-end of 16S ribosomal RNA. This is Small ribosomal subunit protein uS17 from Streptomyces avermitilis (strain ATCC 31267 / DSM 46492 / JCM 5070 / NBRC 14893 / NCIMB 12804 / NRRL 8165 / MA-4680).